Here is a 620-residue protein sequence, read N- to C-terminus: MTMITIDYIKDIIKRSDKLSEEIDPDQTPYKSKYEAIELLVKELKKEINENEKELNQQQQQDILDYLVVIDSKLGELFIATEEITLGLNICRDCLKSLESIKNKFPLETISTFQSIAIIDINKNHFENGKQLLIKSENLINQTIEKQQEQEQEQEQQFKDKLESLQLQNYFYFAQLYGLLKDSELSSKYCELTLRKQLKRNNFDRLEWCKNSLMLAEYYLSELNFDYAKQCFLVSNYICKGIENEDDREETQANIYLVMAKFYLEFLHFFRDIENLNHCHRVNNNNKNNNNENDIDFVQGGLSSISLSDKQKEKEKEDKLFNENQIKKEKMLDLISFNKRSLNIDKPLFTELGSELLDKIYNHSTFTSPIDLIVVKDQPSARDIFLKSQHFFNKSKKYYKLDGFVSQHIKILFDQINLFEYLNMFESNAGRKIGIHKKKIELIQPLLKELNPTYFLSSIRSIYFKIAEIYSEISKIYQCVCTNLREIQTYNECLFKSMEYYNLFLNSYNDGEVPNSPKITEEEKMKSIIEDFEVYINAKLELAVCHKNVKGVNKLVLEHLEKSLNLFRSIITLLDSVPKDISSRHTQEYHLCSQMSSLLPQKIQFLSSNKTPNPGQWYGK.

Coiled-coil stretches lie at residues 30–64 (YKSKYEAIELLVKELKKEINENEKELNQQQQQDIL) and 133–169 (LIKSENLINQTIEKQQEQEQEQEQQFKDKLESLQLQN).

The protein belongs to the KIF-binding protein family.

The protein resides in the cytoplasm. The protein localises to the cytoskeleton. Activator of KIF1B plus-end-directed microtubule motor activity. Required for organization of axonal microtubules, and axonal outgrowth and maintenance during peripheral and central nervous system development. This chain is KIF-binding protein (kifbp), found in Dictyostelium discoideum (Social amoeba).